A 346-amino-acid polypeptide reads, in one-letter code: Annexin A1 (346 aa).

At A2 the chain carries N-acetylalanine. S5 carries the phosphoserine; by TRPM7 modification. Q19 is covalently cross-linked (Isoglutamyl lysine isopeptide (Gln-Lys) (interchain with K-?)). Y21 carries the post-translational modification Phosphotyrosine; by EGFR. S27 bears the Phosphoserine; by PKC mark. Phosphoserine occurs at positions 34 and 37. T41 is subject to Phosphothreonine. Annexin repeat units follow at residues 42-113 (FNPS…ALLK), 114-185 (TPAQ…SLAK), 197-269 (DLAD…AIVK), and 273-344 (SKPA…ALCG). K58 is subject to N6-acetyllysine. 11 residues coordinate Ca(2+): G59, V60, E62, K97, L100, E105, M127, G129, G131, T132, and E134. T136 is modified (phosphothreonine). The Ca(2+) site is built by D171, G210, and R213. K214 is covalently cross-linked (Glycyl lysine isopeptide (Lys-Gly) (interchain with G-Cter in SUMO1); alternate). K214 is covalently cross-linked (Glycyl lysine isopeptide (Lys-Gly) (interchain with G-Cter in SUMO2); alternate). G215 lines the Ca(2+) pocket. The residue at position 239 (K239) is an N6-acetyllysine. Positions 253, 255, and 256 each coordinate Ca(2+). A Glycyl lysine isopeptide (Lys-Gly) (interchain with G-Cter in SUMO1) cross-link involves residue K257. Ca(2+) is bound by residues E261, M286, G288, and G290. At K312 the chain carries N6-acetyllysine. C324 and C343 are disulfide-bonded. Ca(2+) contacts are provided by L328, E330, and T331. K332 participates in a covalent cross-link: Glycyl lysine isopeptide (Lys-Gly) (interchain with G-Cter in SUMO1). E336 is a binding site for Ca(2+).

The protein belongs to the annexin family. As to quaternary structure, homodimer; non-covalently linked. Homodimer; linked by transglutamylation. Homodimers linked by transglutamylation are observed in placenta, but not in other tissues. Interacts with S100A11. Heterotetramer, formed by two molecules each of S100A11 and ANXA1. Interacts with DYSF. Interacts with EGFR. In terms of processing, phosphorylated by protein kinase C, EGFR and TRPM7. Phosphorylated in response to EGF treatment. Sumoylated. Post-translationally, proteolytically cleaved by cathepsin CTSG to release the active N-terminal peptide Ac2-26. Detected in resting neutrophils. Detected in peripheral blood T-cells. Detected in extracellular vesicles in blood serum from patients with inflammatory bowel disease, but not in serum from healthy donors. Detected in placenta (at protein level). Detected in liver.

Its subcellular location is the nucleus. The protein localises to the cytoplasm. It localises to the cell projection. It is found in the cilium. The protein resides in the cell membrane. Its subcellular location is the membrane. The protein localises to the endosome membrane. It localises to the basolateral cell membrane. It is found in the apical cell membrane. The protein resides in the lateral cell membrane. Its subcellular location is the secreted. The protein localises to the extracellular space. It localises to the extracellular exosome. It is found in the cytoplasmic vesicle. The protein resides in the secretory vesicle lumen. Its subcellular location is the phagocytic cup. The protein localises to the early endosome. It localises to the cytoplasmic vesicle membrane. Plays important roles in the innate immune response as effector of glucocorticoid-mediated responses and regulator of the inflammatory process. Has anti-inflammatory activity. Plays a role in glucocorticoid-mediated down-regulation of the early phase of the inflammatory response. Contributes to the adaptive immune response by enhancing signaling cascades that are triggered by T-cell activation, regulates differentiation and proliferation of activated T-cells. Promotes the differentiation of T-cells into Th1 cells and negatively regulates differentiation into Th2 cells. Has no effect on unstimulated T cells. Negatively regulates hormone exocytosis via activation of the formyl peptide receptors and reorganization of the actin cytoskeleton. Has high affinity for Ca(2+) and can bind up to eight Ca(2+) ions. Displays Ca(2+)-dependent binding to phospholipid membranes. Plays a role in the formation of phagocytic cups and phagosomes. Plays a role in phagocytosis by mediating the Ca(2+)-dependent interaction between phagosomes and the actin cytoskeleton. Its function is as follows. Functions at least in part by activating the formyl peptide receptors and downstream signaling cascades. Promotes chemotaxis of granulocytes and monocytes via activation of the formyl peptide receptors. Promotes rearrangement of the actin cytoskeleton, cell polarization and cell migration. Promotes resolution of inflammation and wound healing. Acts via neutrophil N-formyl peptide receptors to enhance the release of CXCL2. In Homo sapiens (Human), this protein is Annexin A1 (ANXA1).